The primary structure comprises 106 residues: L-rhamnose mutarotase (106 aa).

Position 20 (tyrosine 20) interacts with substrate. The active-site Proton donor is the histidine 24. Residues tyrosine 43 and 78-79 (WW) each bind substrate.

Belongs to the rhamnose mutarotase family. As to quaternary structure, homodimer.

The protein localises to the cytoplasm. The enzyme catalyses alpha-L-rhamnose = beta-L-rhamnose. The protein operates within carbohydrate metabolism; L-rhamnose metabolism. Involved in the anomeric conversion of L-rhamnose. In Rhizobium johnstonii (strain DSM 114642 / LMG 32736 / 3841) (Rhizobium leguminosarum bv. viciae), this protein is L-rhamnose mutarotase.